The primary structure comprises 596 residues: Aspartate--tRNA(Asp/Asn) ligase (596 aa).

Residue E169 participates in L-aspartate binding. The segment at Q193–K196 is aspartate. L-aspartate is bound at residue R215. ATP contacts are provided by residues R215 to E217 and Q224. H447 serves as a coordination point for L-aspartate. E481 contributes to the ATP binding site. An L-aspartate-binding site is contributed by R488. G533–R536 is an ATP binding site. Positions G559–A596 are disordered. Basic and acidic residues predominate over residues Q574 to D590.

This sequence belongs to the class-II aminoacyl-tRNA synthetase family. Type 1 subfamily. Homodimer.

Its subcellular location is the cytoplasm. It carries out the reaction tRNA(Asx) + L-aspartate + ATP = L-aspartyl-tRNA(Asx) + AMP + diphosphate. In terms of biological role, aspartyl-tRNA synthetase with relaxed tRNA specificity since it is able to aspartylate not only its cognate tRNA(Asp) but also tRNA(Asn). Reaction proceeds in two steps: L-aspartate is first activated by ATP to form Asp-AMP and then transferred to the acceptor end of tRNA(Asp/Asn). This Arthrobacter sp. (strain FB24) protein is Aspartate--tRNA(Asp/Asn) ligase.